Consider the following 206-residue polypeptide: MKGILGVKVGMTRIFRDDRAVPVTVILAGPCPVVQRRTPEKDGYTAVQLGFLPQNPKRVNRPLKGHFAKAGVEPVRILREIRDFNPEGDTVTVEIFKPGERVDVTGTSKGRGFAGVMKRWNFAGGPDSHGAHKIHRHPGSIGNRKTPGRVYKGKKMAGHYGAERVTVMNLEVVDVIPEENLLLVKGAVPGPNGGLVIVRETKKAAK.

The protein belongs to the universal ribosomal protein uL3 family. In terms of assembly, part of the 50S ribosomal subunit. Forms a cluster with proteins L14 and L19.

In terms of biological role, one of the primary rRNA binding proteins, it binds directly near the 3'-end of the 23S rRNA, where it nucleates assembly of the 50S subunit. The chain is Large ribosomal subunit protein uL3 from Thermus thermophilus (strain ATCC BAA-163 / DSM 7039 / HB27).